The sequence spans 645 residues: Translation factor GUF1, mitochondrial (645 aa).

The tr-type G domain maps to 44-228; that stretch reads ENYRNFSIVA…AIIDRIPPPT (185 aa). GTP is bound by residues 53–60, 120–124, and 174–177; these read AHVDHGKS, DTPGH, and NKID.

Belongs to the TRAFAC class translation factor GTPase superfamily. Classic translation factor GTPase family. LepA subfamily.

The protein localises to the mitochondrion inner membrane. The catalysed reaction is GTP + H2O = GDP + phosphate + H(+). In terms of biological role, promotes mitochondrial protein synthesis. May act as a fidelity factor of the translation reaction, by catalyzing a one-codon backward translocation of tRNAs on improperly translocated ribosomes. Binds to mitochondrial ribosomes in a GTP-dependent manner. The protein is Translation factor GUF1, mitochondrial of Saccharomyces cerevisiae (strain RM11-1a) (Baker's yeast).